The following is a 566-amino-acid chain: Phosphatidylinositol 4-kinase gamma 4 (566 aa).

Ubiquitin-like domains are found at residues 34–111 (TIMI…SDLQ) and 112–190 (VLDV…AKVR). Residues 250–263 (DGLKSGNSPVRSSE) are compositionally biased toward polar residues. Residues 250–272 (DGLKSGNSPVRSSEGTGGAYFMQ) are disordered. One can recognise a PI3K/PI4K catalytic domain in the interval 255-547 (GNSPVRSSEG…AVLPGTSEAA (293 aa)). A G-loop region spans residues 261 to 267 (SSEGTGG). ATP contacts are provided by residues 262–268 (SEGTGGA), Lys284, and 374–377 (QMFT). The interval 407 to 415 (ANADRHGGN) is catalytic loop. Positions 430–456 (PIDHGYCLPESFEDCTFEWLYWPQARK) are activation loop. Residue Asp432 coordinates ATP.

This sequence belongs to the PI3/PI4-kinase family. Type II PI4K subfamily. In terms of assembly, interacts with RPN10, UFD1 and CDC48 in vitro. Autophosphorylated.

The protein localises to the membrane. The catalysed reaction is a 1,2-diacyl-sn-glycero-3-phospho-(1D-myo-inositol) + ATP = a 1,2-diacyl-sn-glycero-3-phospho-(1D-myo-inositol 4-phosphate) + ADP + H(+). Its function is as follows. The phosphorylation of phosphatidylinositol (PI) to PI4P is the first committed step in the generation of phosphatidylinositol 4,5-bisphosphate (PIP2), a precursor of the second messenger inositol 1,4,5-trisphosphate (InsP3). Undergoes autophosphorylation and phosphorylates serine/threonine residues of protein substrates. Phosphorylates RPN10 and UFD1 in vitro. The chain is Phosphatidylinositol 4-kinase gamma 4 from Arabidopsis thaliana (Mouse-ear cress).